We begin with the raw amino-acid sequence, 260 residues long: Carbonic anhydrase 3 (260 aa).

Position 2 is an N-acetylalanine (Ala-2). The region spanning 3-259 is the Alpha-carbonic anhydrase domain; that stretch reads KEWGYADHNG…LKGRVVRASF (257 aa). A phosphoserine mark is found at Ser-29, Ser-43, Ser-50, and Ser-55. The involved in proton transfer stretch occupies residues 64–67; sequence RTCR. Thr-73 is subject to Phosphothreonine. Positions 94, 96, and 119 each coordinate Zn(2+). The residue at position 127 (Tyr-127) is a Phosphotyrosine. Thr-129 and Thr-176 each carry phosphothreonine. S-glutathionyl cysteine is present on residues Cys-182 and Cys-187. 198–199 provides a ligand contact to substrate; it reads TT. Phosphothreonine is present on Thr-216. At Ser-219 the chain carries Phosphoserine.

Belongs to the alpha-carbonic anhydrase family. Zn(2+) is required as a cofactor. Post-translationally, S-thiolated both by thiol-disulfide exchange with glutathione disulfide and by oxyradical-initiated S-thiolation with reduced glutathione. S-glutathionylated in hepatocytes under oxidative stress.

Its subcellular location is the cytoplasm. The catalysed reaction is hydrogencarbonate + H(+) = CO2 + H2O. Inhibited by acetazolamide. Its function is as follows. Reversible hydration of carbon dioxide. In Equus caballus (Horse), this protein is Carbonic anhydrase 3 (CA3).